A 976-amino-acid chain; its full sequence is MTRTDPPDLLVSTVYQDIKVATPGPASKCSPCERSVARPAEPAPFNKRHCRSFDFLEALDGPAMETLPEPPPPESAVPRARTREAEPRRRARSKSAPRAPPGLTPAPASPPVLPRRGREAQRAARAEASPRREPAYPALRALANELHPIKLQPQRGGPGRVAPLCAAAGRCAPPEPPAGPAPHVRCRLDIKPDDAVLQHATRGSRSCGPTEAAHWARPAPQFHGLTVPGPRHMALSRTPTPSDSYCADPRAFYCDGPLPGPRDYAERRSLPFTTPPGPTQFFYTEEPQGFRGSFAASPGPTFDAYYPRPYPSEELSGPSPRRMGGYYAGEVRTFPIQEPPSRSYYGEAPRAYGLPYGPRYVPEEPRAHSTARPFYTEDFGRYRERDVLARTYPHPRSSPAWADWGPRPYRTLQVVPPSDPDPLLASWHGGTGTSPPRLATDSRHYSRSWDNILAPGPRREDPLGRGRSYENLLGREVREPRGVSPEGRRPPVVVNLSTSPRRYAALSLSETSLTEKGRAGEGLGRNWYVTPEITITDNDLRATERPSARAWELPGGRTRPPPHAAPDGPTSGRQRSLEQLDELITDLVIDSRPTAGQASEPAADCLGPQLRRLLDSRPAGSGAPALAPPRSPPASAGSAEEPAAPGEAADASPEPSADEDDLMTCSNARCRRTETMFNACLYFKSCHSCYTYYCSRLCRREDWDAHKARCVYGRVGSVCRHVLQFCRDSGPVHRAFSRIARVGFLSRGRGVLFLGFPSPGSADNFLRFGLEGLLLSPTYLSLRELATHAAPLGSYARELAAAGRLYEPAECFLLSVSVAVGPGTAPPGTPALPAPAPRSHGPTVRKFAKVALAAGSPARPPPARSREPDMETLILTPPPGTAGLDQDGEAGRRAREVAFIHIQRELRLRGVFLRHEFPRVYEQLCEFVEANRRFTPTTIYPTDRRTGRPFMCMIMAASEPRALDWVASANLLDDIM.

Residues 21–49 form a disordered region; that stretch reads ATPGPASKCSPCERSVARPAEPAPFNKRH. Serine 52 bears the Phosphoserine mark. 3 disordered regions span residues 61–136, 220–242, and 264–294; these read GPAM…EPAY, PQFH…PTPS, and YAER…RGSF. A compositionally biased stretch (pro residues) spans 98-113; it reads RAPPGLTPAPASPPVL. A compositionally biased stretch (basic and acidic residues) spans 116-134; it reads RGREAQRAARAEASPRREP. Position 129 is a phosphoserine (serine 129). An Omega-N-methylarginine modification is found at arginine 322. Positions 412-443 are disordered; it reads LQVVPPSDPDPLLASWHGGTGTSPPRLATDSR. Phosphoserine is present on residues serine 468, serine 509, and serine 512. Disordered stretches follow at residues 539–574 and 614–660; these read DLRA…SGRQ and LDSR…ADED. Composition is skewed to low complexity over residues 616–625 and 633–655; these read SRPAGSGAPA and PASA…SPEP. Position 749 is an asymmetric dimethylarginine; alternate (arginine 749). Arginine 749 is modified (omega-N-methylarginine; alternate). The tract at residues 855 to 888 is disordered; the sequence is GSPARPPPARSREPDMETLILTPPPGTAGLDQDG.

The protein localises to the apical cell membrane. It localises to the cell projection. It is found in the cilium. Its subcellular location is the cell junction. The protein resides in the adherens junction. May be involved in the control of adherens junction integrity. This is Apical junction component 1 homolog from Homo sapiens (Human).